We begin with the raw amino-acid sequence, 426 residues long: Synaptotagmin-13 (426 aa).

Residues 1–6 lie on the Vesicular side of the membrane; sequence MVLSVP. A helical membrane pass occupies residues 7–29; sequence VIALGATLGTATSILALCGVTCL. The Cytoplasmic segment spans residues 30–426; the sequence is CRHMHPKKGL…QIAMWHQLHL (397 aa). 2 C2 domains span residues 158–275 and 287–422; these read QAPK…AQWG and GAGE…AMWH.

This sequence belongs to the synaptotagmin family. In terms of assembly, interacts with NRXN1. In terms of tissue distribution, expressed in brain, heart, spleen, lung and testis.

The protein localises to the cytoplasmic vesicle membrane. Functionally, may be involved in transport vesicle docking to the plasma membrane. This is Synaptotagmin-13 (Syt13) from Mus musculus (Mouse).